A 1437-amino-acid polypeptide reads, in one-letter code: FYVE and coiled-coil domain-containing protein 1 (1437 aa).

The residue at position 2 (A2) is an N-acetylalanine. Positions 4–30 (SSTETQLQRIIRDLQDAATELSHEFKE) form a coiled coil. The region spanning 36–169 (TDDSTSLHKF…VQFDLAPRGY (134 aa)) is the RUN domain. S196 carries the phosphoserine modification. Coiled-coil stretches lie at residues 223–270 (SLNN…VSRQ), 305–846 (SQAT…SEGA), and 873–1110 (ALTA…KDAL). T372 is subject to Phosphothreonine. S837 carries the phosphoserine modification. The FYVE-type zinc finger occupies 1132 to 1190 (DMEVNHCHDCKREFSWIVRRHHCRICGRIFCYYCCNNYVVTKPSGKKERCCRACFQKFG). Residues C1138, C1141, C1154, C1157, C1162, C1165, C1182, and C1185 each contribute to the Zn(2+) site. 2 disordered regions span residues 1191–1227 (EGSG…SQGI) and 1253–1289 (SGSS…TEDV). A compositionally biased stretch (low complexity) spans 1194–1206 (GSNDSSGSGTSQG). 2 stretches are compositionally biased toward polar residues: residues 1218-1227 (SPQSIGSQGI) and 1253-1283 (SGSS…SLTP). A GOLD domain is found at 1296–1425 (EICLLKSGEL…SKKVLYHLTV (130 aa)).

As to quaternary structure, can form homodimers. Interacts (via C-terminus) with MAP1LC3B. Interacts with RAB7A; the interaction with RAB7A induces FYCO1 recruitment to late endosomal/lysosomal compartments. In terms of tissue distribution, expressed in heart and testis. Expressed in the eye lens.

The protein localises to the cytoplasmic vesicle. Its subcellular location is the autophagosome. It is found in the endosome. It localises to the lysosome. Functionally, may mediate microtubule plus end-directed vesicle transport. This is FYVE and coiled-coil domain-containing protein 1 (Fyco1) from Mus musculus (Mouse).